Reading from the N-terminus, the 268-residue chain is MTTRIAVTGAAGRMGKALIEAVCQSEDAVLGAAIVAPDSSLVGADAGELAGVGKQGVAIVNDLSTVVADFDVLIDFTSPSATVANASVCKAHNKPMVVGTTGFSPAEKAAFEADASTVPTCVASNFSTGVNLCFKLLDIAARVMGNDADIEVYEAHHRHKVDAPSGTALRMGEVLANAVNRDLNEVAVYGREGQTGARDRNTIGFATVRGGDVVGDHTVSFMCEGERVEITHKASSRLSFARGAVRAATWLVEKEPKIYDMQDVLGLK.

NAD(+) is bound by residues 9-14, 99-101, and 123-126; these read GAAGRM, GTT, and ASNF. The active-site Proton donor/acceptor is histidine 156. Histidine 157 is a binding site for (S)-2,3,4,5-tetrahydrodipicolinate. Residue lysine 160 is the Proton donor of the active site. (S)-2,3,4,5-tetrahydrodipicolinate is bound at residue 166–167; the sequence is GT.

Belongs to the DapB family.

It localises to the cytoplasm. It carries out the reaction (S)-2,3,4,5-tetrahydrodipicolinate + NAD(+) + H2O = (2S,4S)-4-hydroxy-2,3,4,5-tetrahydrodipicolinate + NADH + H(+). The enzyme catalyses (S)-2,3,4,5-tetrahydrodipicolinate + NADP(+) + H2O = (2S,4S)-4-hydroxy-2,3,4,5-tetrahydrodipicolinate + NADPH + H(+). It participates in amino-acid biosynthesis; L-lysine biosynthesis via DAP pathway; (S)-tetrahydrodipicolinate from L-aspartate: step 4/4. Catalyzes the conversion of 4-hydroxy-tetrahydrodipicolinate (HTPA) to tetrahydrodipicolinate. In Saccharophagus degradans (strain 2-40 / ATCC 43961 / DSM 17024), this protein is 4-hydroxy-tetrahydrodipicolinate reductase.